A 329-amino-acid polypeptide reads, in one-letter code: Glycerol-3-phosphate dehydrogenase [NAD(P)+] (329 aa).

NADPH contacts are provided by Trp11 and Lys101. 3 residues coordinate sn-glycerol 3-phosphate: Lys101, Gly132, and Ser134. Ala136 serves as a coordination point for NADPH. The sn-glycerol 3-phosphate site is built by Lys188, Asp241, Ser251, Arg252, and Asn253. Catalysis depends on Lys188, which acts as the Proton acceptor. NADPH is bound at residue Arg252. NADPH is bound at residue Glu278.

This sequence belongs to the NAD-dependent glycerol-3-phosphate dehydrogenase family.

The protein localises to the cytoplasm. It catalyses the reaction sn-glycerol 3-phosphate + NAD(+) = dihydroxyacetone phosphate + NADH + H(+). The catalysed reaction is sn-glycerol 3-phosphate + NADP(+) = dihydroxyacetone phosphate + NADPH + H(+). It functions in the pathway membrane lipid metabolism; glycerophospholipid metabolism. Catalyzes the reduction of the glycolytic intermediate dihydroxyacetone phosphate (DHAP) to sn-glycerol 3-phosphate (G3P), the key precursor for phospholipid synthesis. The polypeptide is Glycerol-3-phosphate dehydrogenase [NAD(P)+] (Onion yellows phytoplasma (strain OY-M)).